The sequence spans 520 residues: Developmental regulatory protein wetA (520 aa).

5 disordered regions span residues 49-72, 104-165, 236-295, 367-453, and 471-496; these read GDLP…NEWS, VPSR…MRSS, QSPS…WQSD, DHSF…GSNK, and LTGV…RRRK. 3 stretches are compositionally biased toward polar residues: residues 63–72, 104–114, and 155–165; these read SPQPWSNEWS, VPSRPTASHGL, and QSFSPSLMRSS. A compositionally biased stretch (low complexity) spans 237 to 251; that stretch reads SPSVSMPSPSIAMSA. The segment covering 252–261 has biased composition (polar residues); it reads RQQQHYIAQP. The span at 262–295 shows a compositional bias: low complexity; it reads SSSSLTNSSPSSADDIFSSSHSSDPHSLSSWQSD. A compositionally biased stretch (polar residues) spans 367–401; it reads DHSFSSSNMLPATPQKFDTSFNTSQVHNVSRSPSL. Over residues 420–429 the composition is skewed to basic residues; it reads PTHRRTHSRK. Low complexity predominate over residues 436–453; that stretch reads NAPKPAKASGSSSRGSNK.

It belongs to the wetA family.

Its function is as follows. BrlA, abaA and wetA are pivotal regulators of conidiophore development and conidium maturation. They act individually and together to regulate their own expression and that of numerous other sporulation-specific genes. Responsible for activating a set of genes whose products make up the final two conidial wall layers or direct their assembly and though this activity is responsible for acquisition of spore dormancy. The polypeptide is Developmental regulatory protein wetA (Penicillium rubens (strain ATCC 28089 / DSM 1075 / NRRL 1951 / Wisconsin 54-1255) (Penicillium chrysogenum)).